A 214-amino-acid chain; its full sequence is Transcriptional activator protein ExaE (214 aa).

Positions 2–118 (GILLVDDHPM…VVLEAVRRVL (117 aa)) constitute a Response regulatory domain. The residue at position 53 (Asp53) is a 4-aspartylphosphate. The region spanning 143–208 (GNARLQGLTQ…ELVHLAIEAG (66 aa)) is the HTH luxR-type domain. Residues 167-186 (TRLIAQQLCISAKTVSNYLT) constitute a DNA-binding region (H-T-H motif).

In terms of biological role, positive regulator of the expression of the gene qedA and the activity of ADH I but does not affect the activities of ADH IIB or ADH IIG. In Pseudomonas putida (Arthrobacter siderocapsulatus), this protein is Transcriptional activator protein ExaE.